Consider the following 431-residue polypeptide: Gamma conglutin 1 (431 aa).

The signal sequence occupies residues 1–24 (MASFLHNFLLFFCSLSLIILTSSA). Residues 51–407 (HVVQIHKRTP…DLMNSRLGFS (357 aa)) form the Peptidase A1 domain. Disulfide bonds link Cys79/Cys168, Cys93/Cys106, Cys98/Cys123, Cys109/Cys118, and Cys322/Cys369.

The protein belongs to the peptidase A1 family. Two-subunit monomeric unit made of alpha and beta subunits coupled by disulfide bonds (at pH 4.5 and under non-reducing conditions). Monomeric alpha and beta subunits in reducing conditions. Can also form oligomers including dimer, tetramer and cyclic hexamer (trimer of dimers) (at pH &gt; 5.5). Component of globulins complexes which accumulate in seeds. Interacts with flavonoids (e.g. apigenin glucosides) present in globulins complexes.

It is found in the secreted. It localises to the extracellular space. Its function is as follows. Sulfur-rich seed storage protein that remains undegraded at germination. The sequence is that of Gamma conglutin 1 from Prunus dulcis (Almond).